The sequence spans 422 residues: C-type lectin domain family 4 member M (422 aa).

The Cytoplasmic segment spans residues methionine 1–glycine 49. An Endocytosis signal motif is present at residues leucine 14–leucine 15. Residues proline 50–valine 70 form a helical; Signal-anchor for type II membrane protein membrane-spanning segment. The Extracellular segment spans residues glutamine 71–glutamate 422. N-linked (GlcNAc...) asparagine glycosylation occurs at asparagine 92. 8 tandem repeats follow at residues lysine 108 to serine 130, lysine 131 to glutamate 151, glutamine 154 to serine 176, arginine 177 to serine 199, arginine 200 to serine 222, arginine 223 to serine 245, lysine 246 to serine 268, and lysine 269 to cysteine 291. Positions lysine 108 to proline 292 are 8 X approximate tandem repeats. Cystine bridges form between cysteine 288–cysteine 418, cysteine 291–cysteine 302, cysteine 319–cysteine 412, and cysteine 391–cysteine 404. Residues phenylalanine 297 to lysine 413 form the C-type lectin domain. Ca(2+) is bound by residues glutamate 382, asparagine 384, serine 386, glutamate 389, asparagine 400, and aspartate 401. Asparagine 384 carries N-linked (GlcNAc...) asparagine glycosylation.

In terms of assembly, homotetramer.

The protein resides in the membrane. Probable pathogen-recognition receptor involved in peripheral immune surveillance in liver. May mediate the endocytosis of pathogens which are subsequently degraded in lysosomal compartments. Probably recognizes in a calcium-dependent manner high mannose N-linked oligosaccharides in a variety of pathogen antigens. Is a receptor for ICAM3, probably by binding to mannose-like carbohydrates. This Symphalangus syndactylus (Siamang) protein is C-type lectin domain family 4 member M (CLEC4M).